The primary structure comprises 78 residues: Putative DPH3 homolog B (78 aa).

One can recognise a DPH-type MB domain in the interval 4–60; it reads FHDEVEIEDFQYDEDSETYFCPCPCGDNFSITKEELENGEGVAMCPGCSLIIKVIYD. Positions 26, 28, 48, and 51 each coordinate Zn(2+).

This sequence belongs to the DPH3 family.

The protein is Putative DPH3 homolog B (DPH3P1) of Homo sapiens (Human).